Consider the following 176-residue polypeptide: MPIKPLIILPDPILRQVSKPVERVDAPLRKLADDMLATMYDAPGIGLAAIQIGEPLRMLVIDLAKEDETPAPHVFINPEILESAEARSVYEEGCLSIPDYYAEVERPASVRVKYLDRDGKLQEMEAEGLMATCLQHEIDHLNGVLFIDHISKLKRDMVVKKFKKLAKDKAPGKLVG.

2 residues coordinate Fe cation: Cys-94 and His-136. The active site involves Glu-137. His-140 serves as a coordination point for Fe cation.

Belongs to the polypeptide deformylase family. Fe(2+) serves as cofactor.

The enzyme catalyses N-terminal N-formyl-L-methionyl-[peptide] + H2O = N-terminal L-methionyl-[peptide] + formate. In terms of biological role, removes the formyl group from the N-terminal Met of newly synthesized proteins. Requires at least a dipeptide for an efficient rate of reaction. N-terminal L-methionine is a prerequisite for activity but the enzyme has broad specificity at other positions. The polypeptide is Peptide deformylase (Mesorhizobium japonicum (strain LMG 29417 / CECT 9101 / MAFF 303099) (Mesorhizobium loti (strain MAFF 303099))).